The chain runs to 43 residues: uncharacterized protein (43 aa).

This is an uncharacterized protein from Dictyostelium discoideum (Social amoeba).